Consider the following 2135-residue polypeptide: Protein SUBSTANDARD STARCH GRAIN 4, chloroplastic (2135 aa).

2 stretches are compositionally biased toward low complexity: residues 1-10 (MSHCLRASPF) and 72-84 (QHQP…RQQQ). Residues 1–42 (MSHCLRASPFLSPPPPLLHPSRRRRHRQGGCIHTSPGTRPLV) constitute a chloroplast transit peptide. 2 disordered regions span residues 1–44 (MSHC…LVAR) and 58–89 (SDSS…PPPP). Residues 43–104 (ARARFDPPPL…ASLAPLWREG (62 aa)) are Stromal-facing. The chain crosses the membrane as a helical span at residues 105 to 125 (LFLVRCSVFAAALSVAAALSW). Residues 126 to 2135 (YAQLRARSFV…LFEYSATSQG (2010 aa)) lie on the Chloroplast intermembrane side of the membrane. A compositionally biased stretch (basic residues) spans 361–370 (RRRYRRKAHS). Disordered regions lie at residues 361-382 (RRRY…SSQQ), 401-492 (SGNP…QVSE), and 1843-1869 (FLGS…SFKP). Composition is skewed to polar residues over residues 373–382 (ISDTDNSSQQ), 454–490 (NFAS…NEQV), and 1846–1856 (SLSTSPDGQQS). A compositionally biased stretch (basic and acidic residues) spans 1857–1866 (ETERTPEHGS).

The protein belongs to the TamB family. Part of the TIC complex, which can interact with components of the TOC complex to form a larger import complex. As to expression, highly expressed in third leaf and developing seeds. Expressed in anthers, pistils, flag leaves and young panicles.

The protein resides in the plastid. The protein localises to the chloroplast inner membrane. Its subcellular location is the chloroplast intermembrane space. It is found in the chloroplast. It localises to the amyloplast. In terms of biological role, part of the inner chloroplast membrane translocon complex (TIC) which associates with the outer chloroplast membrane translocon complex (TOC) and forms a supercomplex involved in protein precursor import into the chloroplast stroma. Required for the regulation of starch granule size in amyloplasts. The polypeptide is Protein SUBSTANDARD STARCH GRAIN 4, chloroplastic (Oryza sativa subsp. japonica (Rice)).